Consider the following 205-residue polypeptide: Outer-membrane lipoprotein LolB (205 aa).

Positions Met-1–Gly-17 are cleaved as a signal peptide. A lipid anchor (N-palmitoyl cysteine) is attached at Cys-18. Cys-18 carries the S-diacylglycerol cysteine lipid modification.

This sequence belongs to the LolB family. In terms of assembly, monomer.

Its subcellular location is the cell outer membrane. In terms of biological role, plays a critical role in the incorporation of lipoproteins in the outer membrane after they are released by the LolA protein. This chain is Outer-membrane lipoprotein LolB, found in Pseudomonas paraeruginosa (strain DSM 24068 / PA7) (Pseudomonas aeruginosa (strain PA7)).